The following is a 191-amino-acid chain: Ureidoglycolate lyase (191 aa).

This sequence belongs to the ureidoglycolate lyase family. Homodimer.

It catalyses the reaction (S)-ureidoglycolate = urea + glyoxylate. Its pathway is nitrogen metabolism; (S)-allantoin degradation. Catalyzes the catabolism of the allantoin degradation intermediate (S)-ureidoglycolate, generating urea and glyoxylate. Involved in the utilization of allantoin as secondary nitrogen source when primary sources are limiting. In Schizosaccharomyces pombe (strain 972 / ATCC 24843) (Fission yeast), this protein is Ureidoglycolate lyase.